The following is a 965-amino-acid chain: Probable ion channel POLLUX (965 aa).

Positions 1–11 are enriched in low complexity; it reads MAESDGGEASP. 2 disordered regions span residues 1-76 and 108-158; these read MAES…APRG and GPHA…KSLA. Residues 32 to 42 show a composition bias toward polar residues; that stretch reads LTKSRTISGSA. Low complexity-rich tracts occupy residues 52-66 and 118-149; these read SNSSSSILVRRSSTA and RSQQQTPTTTAAAAADSRSPTPAAPPQTASVS. A run of 4 helical transmembrane segments spans residues 187–207, 251–271, 317–337, and 369–389; these read LSPYLVLMLVVTVISFSLAIW, ADWNLASCSRMLVFAIPVFLV, LALLLATIILIASGGIALYVV, and IVSVSISSGGMLVFATMLGLV. RCK N-terminal domains are found at residues 410–551 and 670–818; these read VNHI…ETVV and PEKI…DKSI.

The protein belongs to the castor/pollux (TC 1.A.1.23) family. Expressed in roots, leaves, stems and panicles.

The protein localises to the nucleus membrane. Functionally, required for mycorrhizal symbiosis. This chain is Probable ion channel POLLUX, found in Oryza sativa subsp. japonica (Rice).